The primary structure comprises 286 residues: Homoserine kinase (286 aa).

Residue 78–88 coordinates ATP; sequence PLARGLGSSSS.

This sequence belongs to the GHMP kinase family. Homoserine kinase subfamily.

The protein resides in the cytoplasm. The enzyme catalyses L-homoserine + ATP = O-phospho-L-homoserine + ADP + H(+). It functions in the pathway amino-acid biosynthesis; L-threonine biosynthesis; L-threonine from L-aspartate: step 4/5. Catalyzes the ATP-dependent phosphorylation of L-homoserine to L-homoserine phosphate. The sequence is that of Homoserine kinase from Streptococcus equi subsp. equi (strain 4047).